Consider the following 173-residue polypeptide: MPDLKSLIREVPDFPKPGILFYDITTLLKDPSGFHGVIDGLKDHYRDIKVDTVLGIEARGFIFAPALAYALGAGFVPVRKPKKLPAECVRITYDLEYGTDTLEMHKDAIGNGHRVLIVDDLLATGGTASAAARMVQDAGGIVVGLGFVIELTFLAGRQRLNGHDVFSLLQYDK.

Belongs to the purine/pyrimidine phosphoribosyltransferase family. Homodimer.

The protein resides in the cytoplasm. It catalyses the reaction AMP + diphosphate = 5-phospho-alpha-D-ribose 1-diphosphate + adenine. The protein operates within purine metabolism; AMP biosynthesis via salvage pathway; AMP from adenine: step 1/1. In terms of biological role, catalyzes a salvage reaction resulting in the formation of AMP, that is energically less costly than de novo synthesis. This Solibacter usitatus (strain Ellin6076) protein is Adenine phosphoribosyltransferase.